The following is a 523-amino-acid chain: uncharacterized protein (523 aa).

The region spanning Arg193–Arg447 is the Radical SAM core domain. Residues Cys212, Cys220, and Cys223 each coordinate [4Fe-4S] cluster.

[4Fe-4S] cluster is required as a cofactor.

This is an uncharacterized protein from Methanopyrus kandleri (strain AV19 / DSM 6324 / JCM 9639 / NBRC 100938).